Reading from the N-terminus, the 143-residue chain is Sec-independent protein translocase protein TatB (143 aa).

A helical membrane pass occupies residues 2–22 (FGNIGWGEFMVLLVAALVILG). A disordered region spans residues 97 to 143 (FDKPGSVSFDKSNPGTKAVSADPSTPTAPQNKPLAAGERPPIDLDAT).

The protein belongs to the TatB family. The Tat system comprises two distinct complexes: a TatABC complex, containing multiple copies of TatA, TatB and TatC subunits, and a separate TatA complex, containing only TatA subunits. Substrates initially bind to the TatABC complex, which probably triggers association of the separate TatA complex to form the active translocon.

Its subcellular location is the cell membrane. Functionally, part of the twin-arginine translocation (Tat) system that transports large folded proteins containing a characteristic twin-arginine motif in their signal peptide across membranes. Together with TatC, TatB is part of a receptor directly interacting with Tat signal peptides. TatB may form an oligomeric binding site that transiently accommodates folded Tat precursor proteins before their translocation. The chain is Sec-independent protein translocase protein TatB from Rhodococcus opacus (strain B4).